The primary structure comprises 104 residues: Large ribosomal subunit protein uL24 (104 aa).

This sequence belongs to the universal ribosomal protein uL24 family. Part of the 50S ribosomal subunit.

One of two assembly initiator proteins, it binds directly to the 5'-end of the 23S rRNA, where it nucleates assembly of the 50S subunit. Functionally, one of the proteins that surrounds the polypeptide exit tunnel on the outside of the subunit. In Shigella flexneri, this protein is Large ribosomal subunit protein uL24.